Consider the following 213-residue polypeptide: tRNA (guanine-N(7)-)-methyltransferase (213 aa).

Residues E44, E69, D96, and D118 each contribute to the S-adenosyl-L-methionine site. The active site involves D118. Residues K122, D154, and 192–195 (TEYE) contribute to the substrate site.

Belongs to the class I-like SAM-binding methyltransferase superfamily. TrmB family.

It catalyses the reaction guanosine(46) in tRNA + S-adenosyl-L-methionine = N(7)-methylguanosine(46) in tRNA + S-adenosyl-L-homocysteine. Its pathway is tRNA modification; N(7)-methylguanine-tRNA biosynthesis. In terms of biological role, catalyzes the formation of N(7)-methylguanine at position 46 (m7G46) in tRNA. This chain is tRNA (guanine-N(7)-)-methyltransferase, found in Limosilactobacillus reuteri (strain DSM 20016) (Lactobacillus reuteri).